The primary structure comprises 441 residues: Tol-Pal system protein TolB (441 aa).

The signal sequence occupies residues 1-39 (MPTMTPAFSRASLSEALRSYGLALLLFLATLLAWQPAHA).

Belongs to the TolB family. The Tol-Pal system is composed of five core proteins: the inner membrane proteins TolA, TolQ and TolR, the periplasmic protein TolB and the outer membrane protein Pal. They form a network linking the inner and outer membranes and the peptidoglycan layer.

It is found in the periplasm. Part of the Tol-Pal system, which plays a role in outer membrane invagination during cell division and is important for maintaining outer membrane integrity. The polypeptide is Tol-Pal system protein TolB (Bordetella avium (strain 197N)).